Here is a 340-residue protein sequence, read N- to C-terminus: Organic solute transporter subunit alpha (340 aa).

The Extracellular portion of the chain corresponds to 1–48 (MEPGRTHIKLDPRYTAELLELLETNYSISPACFSHPPTAAQLLRALGP). N-linked (GlcNAc...) asparagine glycosylation is present at Asn25. Residues 49 to 69 (VDIALTIILTFLTTGSVAIFL) form a helical membrane-spanning segment. The Cytoplasmic segment spans residues 70-87 (EDAVYLYKNTLCPIKKRT). A helical membrane pass occupies residues 88 to 108 (LIWSSSAPTVVSVFCCFGLWI). At 109–114 (PRALTL) the chain is on the extracellular side. A helical membrane pass occupies residues 115–135 (VEMAITSFYAVCFYLLMMVMV). Over 136 to 181 (EGFGGKKAVLRTLKDTPMRVHTGPCCCCCPCCPPLILTRKKLQLLL) the chain is Cytoplasmic. The helical transmembrane segment at 182–202 (LGPFQYAFFKITLSIVGLFLI) threads the bilayer. Residues 203–219 (PDGIYDPGEISEKSAAL) lie on the Extracellular side of the membrane. Residues 220 to 240 (WINNLLAVSTLLALWSLAILF) form a helical membrane-spanning segment. The Cytoplasmic segment spans residues 241-255 (RQAKMHLGEQNMGSK). A helical transmembrane segment spans residues 256–276 (FALFQVLVILTALQPAIFSIL). Topologically, residues 277 to 297 (ANSGQIACSPPYSSKIRSQVM) are extracellular. Residues 298–317 (NCHMLILETFLMTVLTRMYY) traverse the membrane as a helical segment. At 318–340 (RRKDDKVGYEACSLPDLDSALKA) the chain is on the cytoplasmic side. Ser330 is subject to Phosphoserine.

The protein belongs to the OST-alpha family. In terms of assembly, interacts with SLC51B. The Ost-alpha/Ost-beta complex is a heterodimer composed of alpha (SLC51A) and beta (SLC51B) subunit. Post-translationally, N-glycosylated. In terms of tissue distribution, present at high levels in ileum. In ileum, it is restricted to the apical domain on the mature villus enterocytes with little detectable expression in the goblet cells or crypt enterocytes (at protein level). Expressed in kidney but not in heart, brain, liver, spleen, embryo, lung, thymus, ovary nor testis.

Its subcellular location is the cell membrane. The protein localises to the endoplasmic reticulum membrane. It catalyses the reaction taurocholate(out) = taurocholate(in). The enzyme catalyses tauroursodeoxycholate(out) = tauroursodeoxycholate(in). The catalysed reaction is glycoursodeoxycholate(out) = glycoursodeoxycholate(in). It carries out the reaction glycocholate(out) = glycocholate(in). It catalyses the reaction taurochenodeoxycholate(out) = taurochenodeoxycholate(in). The enzyme catalyses glycochenodeoxycholate(out) = glycochenodeoxycholate(in). The catalysed reaction is taurodeoxycholate(out) = taurodeoxycholate(in). It carries out the reaction glycodeoxycholate(out) = glycodeoxycholate(in). It catalyses the reaction prostaglandin E2(out) = prostaglandin E2(in). The enzyme catalyses estrone 3-sulfate(out) = estrone 3-sulfate(in). The catalysed reaction is dehydroepiandrosterone 3-sulfate(out) = dehydroepiandrosterone 3-sulfate(in). Its function is as follows. Essential component of the Ost-alpha/Ost-beta complex, a heterodimer that acts as the intestinal basolateral transporter responsible for bile acid export from enterocytes into portal blood. Efficiently transports the major species of bile acids (taurocholate). Taurine conjugates are transported more efficiently across the basolateral membrane than glycine-conjugated bile acids. Can also transport steroids such as estrone 3-sulfate and dehydroepiandrosterone 3-sulfate, therefore playing a role in the enterohepatic circulation of sterols. Able to transport eicosanoids such as prostaglandin E2. The polypeptide is Organic solute transporter subunit alpha (Slc51a) (Mus musculus (Mouse)).